The primary structure comprises 332 residues: uncharacterized protein (332 aa).

Residues 1–32 (MSRDRGARGLRKYGRFALATGAATALSLTASG) form the signal peptide. Cysteine 33 carries N-palmitoyl cysteine lipidation. The S-diacylglycerol cysteine moiety is linked to residue cysteine 33.

It is found in the cell membrane. This is an uncharacterized protein from Streptomyces avermitilis (strain ATCC 31267 / DSM 46492 / JCM 5070 / NBRC 14893 / NCIMB 12804 / NRRL 8165 / MA-4680).